The chain runs to 257 residues: Glycerol-3-phosphate acyltransferase (257 aa).

Transmembrane regions (helical) follow at residues 7-27, 66-86, 104-124, 140-160, 164-184, and 203-223; these read IVMA…LIGS, ILTL…TYII, AILV…PIFF, ITVD…ILLI, MSLS…VPGI, and YVIK…SLLI.

It belongs to the PlsY family. In terms of assembly, probably interacts with PlsX.

It localises to the cell membrane. It carries out the reaction an acyl phosphate + sn-glycerol 3-phosphate = a 1-acyl-sn-glycero-3-phosphate + phosphate. It functions in the pathway lipid metabolism; phospholipid metabolism. In terms of biological role, catalyzes the transfer of an acyl group from acyl-phosphate (acyl-PO(4)) to glycerol-3-phosphate (G3P) to form lysophosphatidic acid (LPA). This enzyme utilizes acyl-phosphate as fatty acyl donor, but not acyl-CoA or acyl-ACP. This Ureaplasma parvum serovar 3 (strain ATCC 700970) protein is Glycerol-3-phosphate acyltransferase.